The primary structure comprises 459 residues: Serine protease HTRA3 (459 aa).

The signal sequence occupies residues 1 to 23 (MQARALLPATLAILATLAVLALA). Positions 27–90 (PAAPCPARCD…ECVRGVCRCR (64 aa)) constitute an IGFBP N-terminal domain. Disulfide bonds link Cys-31–Cys-54, Cys-35–Cys-56, Cys-40–Cys-57, Cys-45–Cys-60, Cys-68–Cys-82, Cys-76–Cys-87, Cys-89–Cys-107, and Cys-96–Cys-132. Residues 76-134 (CGDSLECVRGVCRCRWTHTVCGTDGHTYADVCALQAASRRALQVSGTPVRQLQKGACPS) form the Kazal-like domain. The tract at residues 181 to 347 (GSGFIMSEAG…IPSDRITRFL (167 aa)) is serine protease. Residues His-197, Asp-233, and Ser-311 each act as charge relay system in the active site. Residues 365-450 (IRMRTITPSL…EVRRGNDDLL (86 aa)) enclose the PDZ domain.

Belongs to the peptidase S1C family. As to quaternary structure, homotrimer. Interacts with MYH9. Interacts with TGFB1; the interaction inhibits TGFB-mediated signaling. Interacts with BMP4; the interaction inhibits BMP4-mediated signaling. Interacts with TGFB2 and GDF5. In terms of tissue distribution, highest level of isoform 1 in maternal part of the placenta, moderate level in heart, testis and ovary, low level in muscle and lung. High expression found in granulosa cells of the ovary. Expressed in bone matrix, particularly in articular chondrocytes. Very low level of isoform 2 expressed in placenta. Expressed in the bone matrix, particularly in articular chondrocytes.

It is found in the secreted. Serine protease that cleaves beta-casein/CSN2 as well as several extracellular matrix (ECM) proteoglycans such as decorin/DCN, biglycan/BGN and fibronectin/FN1. Inhibits signaling mediated by TGF-beta family proteins possibly indirectly by degradation of these ECM proteoglycans. May act as a tumor suppressor. Negatively regulates, in vitro, trophoblast invasion during placental development and may be involved in the development of the placenta in vivo. May also have a role in ovarian development, granulosa cell differentiation and luteinization. In Mus musculus (Mouse), this protein is Serine protease HTRA3 (Htra3).